The following is a 788-amino-acid chain: Multifunctional tryptophan biosynthesis protein (788 aa).

The Glutamine amidotransferase type-1 domain occupies 12–207 (DILMIDNFDS…MKLKGGTWEE (196 aa)). 63–65 (GPG) lines the L-glutamine pocket. Cysteine 91 (nucleophile; for GATase activity) is an active-site residue. An L-glutamine-binding site is contributed by 141-142 (SL). Active-site for GATase activity residues include histidine 181 and glutamate 183. Residues 238–503 (ILEKICAQRQ…DTRAFIRQLL (266 aa)) form an indole-3-glycerol phosphate synthase region. Residues 520–788 (LSRSCGIRTE…RAFVKAAKKL (269 aa)) form an N-(5'-phosphoribosyl)anthranilate isomerase region.

It catalyses the reaction N-(5-phospho-beta-D-ribosyl)anthranilate = 1-(2-carboxyphenylamino)-1-deoxy-D-ribulose 5-phosphate. The enzyme catalyses 1-(2-carboxyphenylamino)-1-deoxy-D-ribulose 5-phosphate + H(+) = (1S,2R)-1-C-(indol-3-yl)glycerol 3-phosphate + CO2 + H2O. The catalysed reaction is chorismate + L-glutamine = anthranilate + pyruvate + L-glutamate + H(+). It functions in the pathway amino-acid biosynthesis; L-tryptophan biosynthesis; L-tryptophan from chorismate: step 1/5. It participates in amino-acid biosynthesis; L-tryptophan biosynthesis; L-tryptophan from chorismate: step 3/5. The protein operates within amino-acid biosynthesis; L-tryptophan biosynthesis; L-tryptophan from chorismate: step 4/5. Its function is as follows. Trifunctional enzyme bearing the Gln amidotransferase (GATase) domain of anthranilate synthase, indole-glycerolphosphate synthase, and phosphoribosylanthranilate isomerase activities. The protein is Multifunctional tryptophan biosynthesis protein (TRPC) of Phanerodontia chrysosporium (White-rot fungus).